Here is a 250-residue protein sequence, read N- to C-terminus: Probable transcriptional regulatory protein SYNPCC7002_A1640 (250 aa).

Belongs to the TACO1 family.

The protein localises to the cytoplasm. The chain is Probable transcriptional regulatory protein SYNPCC7002_A1640 from Picosynechococcus sp. (strain ATCC 27264 / PCC 7002 / PR-6) (Agmenellum quadruplicatum).